Reading from the N-terminus, the 146-residue chain is Large ribosomal subunit protein bL21 (146 aa).

The disordered stretch occupies residues 96-146 (KKKTRRKMGHRQELTRVMVKSISITNSTPKTSSKTEVKKKSTSPKASNPEN).

This sequence belongs to the bacterial ribosomal protein bL21 family. Part of the 50S ribosomal subunit. Contacts protein L20.

Its function is as follows. This protein binds to 23S rRNA in the presence of protein L20. The chain is Large ribosomal subunit protein bL21 from Prochlorococcus marinus subsp. pastoris (strain CCMP1986 / NIES-2087 / MED4).